Here is a 458-residue protein sequence, read N- to C-terminus: Maturase-like protein 1 (458 aa).

This sequence to group II intron maturases.

The protein localises to the plastid. It localises to the chloroplast. Its function is as follows. Could be required for group III intron excision. The sequence is that of Maturase-like protein 1 (mat1) from Euglena gracilis.